The following is a 505-amino-acid chain: Probable RNA exonuclease NGL3 (505 aa).

Disordered stretches follow at residues 1–75 (MDSQ…FPTP) and 334–369 (RNGEESDQDDEECDEKSRGEGHSDQPQNPKPESFTA). The span at 10 to 23 (SPSQKESSSTSGLV) shows a compositional bias: polar residues. Residues 36-54 (HRDQLSVDQIKKIREERAQ) show a composition bias toward basic and acidic residues. A Phosphoserine modification is found at Ser62. Positions 338–347 (ESDQDDEECD) are enriched in acidic residues.

This sequence belongs to the CCR4/nocturin family.

This is Probable RNA exonuclease NGL3 (NGL3) from Saccharomyces cerevisiae (strain ATCC 204508 / S288c) (Baker's yeast).